Reading from the N-terminus, the 348-residue chain is Dihydroorotase (348 aa).

Residues histidine 14 and histidine 16 each contribute to the Zn(2+) site. Substrate is bound by residues 16-18 (HLR) and asparagine 42. 3 residues coordinate Zn(2+): lysine 100, histidine 137, and histidine 175. Lysine 100 carries the post-translational modification N6-carboxylysine. Histidine 137 contacts substrate. Leucine 220 lines the substrate pocket. Zn(2+) is bound at residue aspartate 248. Residue aspartate 248 is part of the active site. 2 residues coordinate substrate: histidine 252 and alanine 264.

It belongs to the metallo-dependent hydrolases superfamily. DHOase family. Class II DHOase subfamily. As to quaternary structure, homodimer. Zn(2+) serves as cofactor.

The enzyme catalyses (S)-dihydroorotate + H2O = N-carbamoyl-L-aspartate + H(+). Its pathway is pyrimidine metabolism; UMP biosynthesis via de novo pathway; (S)-dihydroorotate from bicarbonate: step 3/3. Catalyzes the reversible cyclization of carbamoyl aspartate to dihydroorotate. This is Dihydroorotase from Pseudomonas putida (strain ATCC 700007 / DSM 6899 / JCM 31910 / BCRC 17059 / LMG 24140 / F1).